A 522-amino-acid polypeptide reads, in one-letter code: MSTSDHDRLLIIDFGSQVTQLIARRLRELNVYCEIHPFNLVDDAFLDAFGAKAVIFSGGPSSVFADGAPMPPASVFERGVPILGICYGQQVMMHCLGGKVERGHGTAEFGRAYVTPTAQKLDMLQGWFETDQDREQVWMSHGDHVSQIAPGFEVFGTSPNAPFAITADTTRHFYAVQFHPEVHHTPNGARLYENFVRLAGFKGDWTMGAYREEAIAKIREQVGSGRVICALSGGVDSSVAAVLIHEAIGDQLTCVYVDHGLMRKDESAQVVGMFREHYNLPLIHADESDLFLGKLEGVSDPETKRKIIGGLFIEVFEKYAKEIGGADFLAQGTLYPDVIESVSFSGGPSVTIKSHHNVGGLPERMNMQLVEPLRELFKDEVRALGHELGLPASFIGRHPFPGPGLAIRCPGEITREKLDILREADAVYIDQIRKHGLYDEIWQAFVAILPVRTVGVMGDGRTYDFACALRAVTSVDGMTADYYPFTHEFLGETATRIINEVPGINRVTYDITSKPPGTIEWE.

Residues 8-204 (RLLIIDFGSQ…FVRLAGFKGD (197 aa)) enclose the Glutamine amidotransferase type-1 domain. The active-site Nucleophile is the Cys86. Active-site residues include His179 and Glu181. In terms of domain architecture, GMPS ATP-PPase spans 205-397 (WTMGAYREEA…LGLPASFIGR (193 aa)). An ATP-binding site is contributed by 232–238 (SGGVDSS).

In terms of assembly, homodimer.

It catalyses the reaction XMP + L-glutamine + ATP + H2O = GMP + L-glutamate + AMP + diphosphate + 2 H(+). It participates in purine metabolism; GMP biosynthesis; GMP from XMP (L-Gln route): step 1/1. Functionally, catalyzes the synthesis of GMP from XMP. This Roseobacter denitrificans (strain ATCC 33942 / OCh 114) (Erythrobacter sp. (strain OCh 114)) protein is GMP synthase [glutamine-hydrolyzing].